Consider the following 154-residue polypeptide: Putative pre-16S rRNA nuclease (154 aa).

This sequence belongs to the YqgF nuclease family.

It is found in the cytoplasm. Could be a nuclease involved in processing of the 5'-end of pre-16S rRNA. The chain is Putative pre-16S rRNA nuclease from Pelotomaculum thermopropionicum (strain DSM 13744 / JCM 10971 / SI).